We begin with the raw amino-acid sequence, 618 residues long: 1-deoxy-D-xylulose-5-phosphate synthase (618 aa).

Thiamine diphosphate contacts are provided by residues His-76 and 117-119 (GHS). Residue Asp-148 coordinates Mg(2+). Thiamine diphosphate contacts are provided by residues 149–150 (GA), Asn-177, Tyr-284, and Glu-366. Asn-177 is a binding site for Mg(2+).

This sequence belongs to the transketolase family. DXPS subfamily. Homodimer. Mg(2+) serves as cofactor. It depends on thiamine diphosphate as a cofactor.

The enzyme catalyses D-glyceraldehyde 3-phosphate + pyruvate + H(+) = 1-deoxy-D-xylulose 5-phosphate + CO2. It participates in metabolic intermediate biosynthesis; 1-deoxy-D-xylulose 5-phosphate biosynthesis; 1-deoxy-D-xylulose 5-phosphate from D-glyceraldehyde 3-phosphate and pyruvate: step 1/1. Catalyzes the acyloin condensation reaction between C atoms 2 and 3 of pyruvate and glyceraldehyde 3-phosphate to yield 1-deoxy-D-xylulose-5-phosphate (DXP). The polypeptide is 1-deoxy-D-xylulose-5-phosphate synthase (Dechloromonas aromatica (strain RCB)).